The following is a 394-amino-acid chain: Elongation factor Tu 1 (394 aa).

A tr-type G domain is found at 10-204 (KPHVNVGTIG…ALDSYIPEPQ (195 aa)). The G1 stretch occupies residues 19 to 26 (GHVDHGKT). Residue 19-26 (GHVDHGKT) participates in GTP binding. T26 serves as a coordination point for Mg(2+). A G2 region spans residues 60–64 (GITIN). The segment at 81–84 (DCPG) is G3. Residues 81–85 (DCPGH) and 136–139 (NKCD) contribute to the GTP site. The tract at residues 136–139 (NKCD) is G4. A G5 region spans residues 174–176 (SAL).

Belongs to the TRAFAC class translation factor GTPase superfamily. Classic translation factor GTPase family. EF-Tu/EF-1A subfamily. Monomer.

It localises to the cytoplasm. It carries out the reaction GTP + H2O = GDP + phosphate + H(+). Functionally, GTP hydrolase that promotes the GTP-dependent binding of aminoacyl-tRNA to the A-site of ribosomes during protein biosynthesis. The chain is Elongation factor Tu 1 from Shewanella baltica (strain OS195).